Here is a 370-residue protein sequence, read N- to C-terminus: Cytochrome b (370 aa).

4 helical membrane passes run 25-45 (FGSM…FLAV), 69-90 (WMMQ…YIHI), 105-125 (WLSG…GYVL), and 170-190 (FFAL…LHIL). 2 residues coordinate heme b: H75 and H89. Heme b contacts are provided by H174 and H188. H193 provides a ligand contact to a ubiquinone. 4 helical membrane-spanning segments follow: residues 218 to 238 (YKDM…VSFF), 280 to 300 (LGGA…PFTH), 312 to 332 (LMQL…WTAT), and 339 to 358 (FTTI…ISNP).

It belongs to the cytochrome b family. In terms of assembly, the cytochrome bc1 complex contains 3 respiratory subunits (MT-CYB, CYC1 and UQCRFS1), 2 core proteins (UQCRC1 and UQCRC2) and probably 6 low-molecular weight proteins. Heme b serves as cofactor.

Its subcellular location is the mitochondrion inner membrane. Its function is as follows. Component of the ubiquinol-cytochrome c reductase complex (complex III or cytochrome b-c1 complex) that is part of the mitochondrial respiratory chain. The b-c1 complex mediates electron transfer from ubiquinol to cytochrome c. Contributes to the generation of a proton gradient across the mitochondrial membrane that is then used for ATP synthesis. The polypeptide is Cytochrome b (MT-CYB) (Chilabothrus striatus (Haitian boa constrictor)).